Reading from the N-terminus, the 158-residue chain is Transmembrane protein 50B (158 aa).

Ala-2 is subject to N-acetylalanine. 4 helical membrane passes run 28–48 (VVAG…AVVY), 56–76 (HAFH…NAVS), 98–118 (WLFI…WILF), and 128–148 (VYPG…TLIY).

The protein belongs to the UPF0220 family. May form homotrimers or homodimers.

The protein resides in the endoplasmic reticulum membrane. The protein localises to the golgi apparatus membrane. The sequence is that of Transmembrane protein 50B (TMEM50B) from Bos taurus (Bovine).